Reading from the N-terminus, the 825-residue chain is Probable phosphoketolase (825 aa).

This sequence belongs to the XFP family. Thiamine diphosphate is required as a cofactor.

This chain is Probable phosphoketolase, found in Schizosaccharomyces pombe (strain 972 / ATCC 24843) (Fission yeast).